The chain runs to 494 residues: Glycerol kinase (494 aa).

Thr-13 provides a ligand contact to ADP. Residues Thr-13, Thr-14, and Ser-15 each contribute to the ATP site. Residue Thr-13 coordinates sn-glycerol 3-phosphate. Position 17 (Arg-17) interacts with ADP. Arg-83, Glu-84, Tyr-135, and Asp-244 together coordinate sn-glycerol 3-phosphate. The glycerol site is built by Arg-83, Glu-84, Tyr-135, Asp-244, and Gln-245. Positions 266 and 309 each coordinate ADP. Residues Thr-266, Gly-309, Gln-313, and Gly-410 each contribute to the ATP site. ADP-binding residues include Gly-410 and Asn-414.

This sequence belongs to the FGGY kinase family.

The enzyme catalyses glycerol + ATP = sn-glycerol 3-phosphate + ADP + H(+). It functions in the pathway polyol metabolism; glycerol degradation via glycerol kinase pathway; sn-glycerol 3-phosphate from glycerol: step 1/1. Inhibited by fructose 1,6-bisphosphate (FBP). Functionally, key enzyme in the regulation of glycerol uptake and metabolism. Catalyzes the phosphorylation of glycerol to yield sn-glycerol 3-phosphate. The polypeptide is Glycerol kinase (Shewanella baltica (strain OS185)).